Here is a 229-residue protein sequence, read N- to C-terminus: UPF0758 protein MA_1979 (229 aa).

The 123-residue stretch at 106 to 228 (KICSPKDVYA…YVSLKDEGFV (123 aa)) folds into the MPN domain. Positions 177, 179, and 190 each coordinate Zn(2+). The short motif at 177-190 (HNHPSGDPSPSRED) is the JAMM motif element.

Belongs to the UPF0758 family.

This is UPF0758 protein MA_1979 from Methanosarcina acetivorans (strain ATCC 35395 / DSM 2834 / JCM 12185 / C2A).